Reading from the N-terminus, the 160-residue chain is GTP-dependent dephospho-CoA kinase (160 aa).

GTP-binding residues include Asp-45, Ile-46, Val-47, Asp-59, Lys-61, Glu-108, and Asp-130.

This sequence belongs to the GTP-dependent DPCK family.

The enzyme catalyses 3'-dephospho-CoA + GTP = GDP + CoA + H(+). The protein operates within cofactor biosynthesis; coenzyme A biosynthesis. Functionally, catalyzes the GTP-dependent phosphorylation of the 3'-hydroxyl group of dephosphocoenzyme A to form coenzyme A (CoA). This Staphylothermus marinus (strain ATCC 43588 / DSM 3639 / JCM 9404 / F1) protein is GTP-dependent dephospho-CoA kinase.